A 169-amino-acid polypeptide reads, in one-letter code: Endoribonuclease YbeY (169 aa).

Positions 128, 132, and 138 each coordinate Zn(2+).

The protein belongs to the endoribonuclease YbeY family. Zn(2+) is required as a cofactor.

It localises to the cytoplasm. In terms of biological role, single strand-specific metallo-endoribonuclease involved in late-stage 70S ribosome quality control and in maturation of the 3' terminus of the 16S rRNA. The chain is Endoribonuclease YbeY from Cyanothece sp. (strain PCC 7425 / ATCC 29141).